The following is a 641-amino-acid chain: FACT complex subunit SSRP1-A (641 aa).

The segment at 459–561 (TDDDAVDPHL…DPNAPKRAMT (103 aa)) is disordered. The segment covering 476 to 487 (GDEESDEEDEDF) has biased composition (acidic residues). The span at 512–524 (GGEKEKLSKKEAS) shows a compositional bias: basic and acidic residues. A DNA-binding region (HMG box) is located at residues 556 to 624 (PKRAMTPFMY…RYEKESAVYR (69 aa)).

It belongs to the SSRP1 family. In terms of assembly, component of the FACT complex, a stable heterodimer of SPT16 and SSRP1.

It is found in the nucleus. It localises to the chromosome. In terms of biological role, component of the FACT complex, a general chromatin factor that acts to reorganize nucleosomes. The FACT complex is involved in multiple processes that require DNA as a template such as mRNA elongation, DNA replication and DNA repair. During transcription elongation the FACT complex acts as a histone chaperone that both destabilizes and restores nucleosomal structure. It facilitates the passage of RNA polymerase II and transcription by promoting the dissociation of one histone H2A-H2B dimer from the nucleosome, then subsequently promotes the reestablishment of the nucleosome following the passage of RNA polymerase II. Binds specifically to double-stranded DNA. In Oryza sativa subsp. japonica (Rice), this protein is FACT complex subunit SSRP1-A (SSRP1-A).